Here is a 104-residue protein sequence, read N- to C-terminus: Large ribosomal subunit protein bL21 (104 aa).

This sequence belongs to the bacterial ribosomal protein bL21 family. Part of the 50S ribosomal subunit. Contacts protein L20.

Functionally, this protein binds to 23S rRNA in the presence of protein L20. This is Large ribosomal subunit protein bL21 from Clostridium tetani (strain Massachusetts / E88).